The chain runs to 161 residues: Alpha-crystallin A chain (161 aa).

Methionine 1 carries the post-translational modification N-acetylmethionine. Residues 1–53 are required for complex formation with BFSP1 and BFSP2; the sequence is MDVTIQHPWFKRALGPFYHNRLFDQFFGEGLFEYDLLPFQSLFRTVLDSGISE. Glutamine 6 and glutamine 40 each carry deamidated glutamine; partial. The 110-residue stretch at 41-150 folds into the sHSP domain; sequence SLFRTVLDSG…SHSERAIPVS (110 aa). At lysine 87 the chain carries N6-acetyllysine. Histidine 88 contacts Zn(2+). Deamidated asparagine; partial is present on asparagine 89. Zn(2+) contacts are provided by glutamate 90 and histidine 95. Serine 110 carries the post-translational modification Phosphoserine. The residue at position 111 (asparagine 111) is a Deamidated asparagine; partial. The cysteines at positions 119 and 130 are disulfide-linked. Deamidated glutamine; partial is present on glutamine 135. Residues 135–161 are disordered; that stretch reads QSGMDASHSERAIPVSREEKASSAPNS. A compositionally biased stretch (basic and acidic residues) spans 141–155; sequence SHSERAIPVSREEKA. Zn(2+) is bound at residue histidine 142. Serine 150 carries O-linked (GlcNAc) serine glycosylation.

It belongs to the small heat shock protein (HSP20) family. In terms of assembly, heteromer composed of three CRYAA and one CRYAB subunits. Inter-subunit bridging via zinc ions enhances stability, which is crucial as there is no protein turn over in the lens. Can also form homodimers and homotetramers (dimers of dimers) which serve as the building blocks of homooligomers. Within homooligomers, the zinc-binding motif is created from residues of 3 different molecules. His-88 and Glu-90 from one molecule are ligands of the zinc ion, and His-95 and His-142 residues from additional molecules complete the site with tetrahedral coordination geometry. Part of a complex required for lens intermediate filament formation composed of BFSP1, BFSP2 and CRYAA. Undergoes age-dependent proteolytical cleavage at the C-terminus.

It is found in the cytoplasm. Its subcellular location is the nucleus. In terms of biological role, contributes to the transparency and refractive index of the lens. In its oxidized form (absence of intramolecular disulfide bond), acts as a chaperone, preventing aggregation of various proteins under a wide range of stress conditions. Required for the correct formation of lens intermediate filaments as part of a complex composed of BFSP1, BFSP2 and CRYAA. This Trichechus inunguis (Amazon manatee) protein is Alpha-crystallin A chain (CRYAA).